Here is a 65-residue protein sequence, read N- to C-terminus: Orally active insecticidal peptide-3 (65 aa).

Residues 1 to 21 (MKTSVLFAILGLALLFCLSFG) form the signal peptide. A propeptide spanning residues 22 to 29 (VELEETGR) is cleaved from the precursor. Disulfide bonds link C31–C46, C38–C51, and C45–C58. The residue at position 62 (P62) is a Proline amide.

The protein belongs to the neurotoxin 10 (Hwtx-1) family. 46 (Jztx-7/10/12) subfamily. In terms of tissue distribution, expressed by the venom gland.

The protein localises to the secreted. Its function is as follows. Probable ion channel inhibitor. Shows insecticidal activity when injected into mealworms. The chain is Orally active insecticidal peptide-3 from Selenotypus plumipes (Australian featherleg tarantula).